A 127-amino-acid polypeptide reads, in one-letter code: EF-hand calcium-binding domain-containing protein 10 (127 aa).

The region spanning 63–98 is the EF-hand domain; it reads MDNSNIVAMFEMMDSSGRGTISFVQYKEALKTLGLC.

The protein is EF-hand calcium-binding domain-containing protein 10 (EFCAB10) of Homo sapiens (Human).